A 430-amino-acid chain; its full sequence is 5-methylthioadenosine/S-adenosylhomocysteine deaminase (430 aa).

His-59 and His-61 together coordinate Zn(2+). Substrate contacts are provided by Glu-88 and His-181. His-208 is a Zn(2+) binding site. Residues Glu-211 and Asp-296 each contribute to the substrate site. Asp-296 lines the Zn(2+) pocket.

The protein belongs to the metallo-dependent hydrolases superfamily. MTA/SAH deaminase family. The cofactor is Zn(2+).

It carries out the reaction S-adenosyl-L-homocysteine + H2O + H(+) = S-inosyl-L-homocysteine + NH4(+). The catalysed reaction is S-methyl-5'-thioadenosine + H2O + H(+) = S-methyl-5'-thioinosine + NH4(+). Catalyzes the deamination of 5-methylthioadenosine and S-adenosyl-L-homocysteine into 5-methylthioinosine and S-inosyl-L-homocysteine, respectively. Is also able to deaminate adenosine. In Aquifex aeolicus (strain VF5), this protein is 5-methylthioadenosine/S-adenosylhomocysteine deaminase.